Here is a 193-residue protein sequence, read N- to C-terminus: UPF0301 protein Bfl251 (193 aa).

It belongs to the UPF0301 (AlgH) family.

The polypeptide is UPF0301 protein Bfl251 (Blochmanniella floridana).